The sequence spans 609 residues: Mitochondrial nucleoid-associated protein 1 (609 aa).

Residues 1–552 (MSDNPPRMEV…IRCNTTIRKS (552 aa)) lie on the Mitochondrial matrix side of the membrane. 3 disordered regions span residues 142-168 (ASEK…NPSE), 183-202 (SNQD…TTSG), and 410-441 (QLSL…HTPQ). Residues 146-161 (TSPKRELAKDLPKSGE) are compositionally biased toward basic and acidic residues. Residues 418–441 (DSQFQASHTGCQSPLCSAQRHTPQ) are compositionally biased toward polar residues. A helical transmembrane segment spans residues 553 to 573 (GFGGITMLFTGYFVLCCSWSF). Topologically, residues 574–609 (RRLKKLCRPLPWKSTVPPCIGVAKTTGDCRSKTCLD) are mitochondrial intermembrane.

It is found in the mitochondrion inner membrane. It localises to the mitochondrion matrix. The protein localises to the mitochondrion nucleoid. Functionally, critical regulator of mitochondrial DNA (mtDNA) abundance. Binds dsDNA throughout the mitochondrial genome without sequence specificity and controls mtDNA copy number by promoting its replication. Also plays important roles in mitochondrial metabolism and cell proliferation. The polypeptide is Mitochondrial nucleoid-associated protein 1 (Homo sapiens (Human)).